We begin with the raw amino-acid sequence, 892 residues long: Integrator complex subunit 6 (892 aa).

In terms of domain architecture, VWFA spans 3–227 (ILLFLIDTSA…QCLESLVQKV (225 aa)). An Inhibitory loop motif is present at residues 630-637 (MMIDEADE). Disordered regions lie at residues 665–692 (MSPL…GTQG), 711–754 (VGGT…AAPD), and 771–793 (PDHT…EVNE).

It belongs to the Integrator subunit 6 family. In terms of assembly, component of the Integrator complex, composed of core subunits INTS1, INTS2, INTS3, INTS4, INTS5, INTS6, INTS7, INTS8, INTS9/RC74, INTS10, INTS11/CPSF3L, INTS12, INTS13, INTS14 and INTS15. The core complex associates with protein phosphatase 2A subunits PPP2CA and PPP2R1A, to form the Integrator-PP2A (INTAC) complex.

It localises to the nucleus. The protein resides in the chromosome. Component of the integrator complex, a multiprotein complex that terminates RNA polymerase II (Pol II) transcription in the promoter-proximal region of genes. The integrator complex provides a quality checkpoint during transcription elongation by driving premature transcription termination of transcripts that are unfavorably configured for transcriptional elongation: the complex terminates transcription by (1) catalyzing dephosphorylation of the C-terminal domain (CTD) of Pol II subunit POLR2A/RPB1 and SUPT5H/SPT5, (2) degrading the exiting nascent RNA transcript via endonuclease activity and (3) promoting the release of Pol II from bound DNA. The integrator complex is also involved in terminating the synthesis of non-coding Pol II transcripts, such as enhancer RNAs (eRNAs), small nuclear RNAs (snRNAs), telomerase RNAs and long non-coding RNAs (lncRNAs). Within the integrator complex, INTS6 acts as a molecular adapter that promotes assembly of protein phosphatase 2A (PP2A) subunits to the integrator core complex, promoting recruitment of PP2A to transcription pause-release checkpoint. This Danio rerio (Zebrafish) protein is Integrator complex subunit 6 (ints6l).